A 213-amino-acid chain; its full sequence is MDTLWDISPPVSPATPVWPGDTPVAVERVWRMEAGSPVNVARLTLSPHTGAHCDAPLHYDADGAPIGAVPLDTYLGPCRVIHCIGASPVVRPADVEVALDGVPPRVLLRTYARAAVEQWDSAFCAVAPDTVDLLAAHGVKLIGIDTPSLDPQESKTMDAHHRVRAHRMAILEGIVLDDVPPGDYELIALPLKFATLDASPVRAVLRALPAHAS.

Tryptophan 18 contributes to the substrate binding site. Zn(2+) is bound by residues histidine 48, histidine 52, and aspartate 54. The Proton donor/acceptor role is filled by histidine 58. Residues histidine 160 and glutamate 172 each coordinate Zn(2+).

It belongs to the Cyclase 1 superfamily. KynB family. Homodimer. The cofactor is Zn(2+).

It catalyses the reaction N-formyl-L-kynurenine + H2O = L-kynurenine + formate + H(+). The protein operates within amino-acid degradation; L-tryptophan degradation via kynurenine pathway; L-kynurenine from L-tryptophan: step 2/2. Catalyzes the hydrolysis of N-formyl-L-kynurenine to L-kynurenine, the second step in the kynurenine pathway of tryptophan degradation. The polypeptide is Kynurenine formamidase (Burkholderia orbicola (strain MC0-3)).